Reading from the N-terminus, the 211-residue chain is Ribosomal RNA large subunit methyltransferase E (211 aa).

Positions 55, 57, 75, 93, and 117 each coordinate S-adenosyl-L-methionine. Lys-157 acts as the Proton acceptor in catalysis.

Belongs to the class I-like SAM-binding methyltransferase superfamily. RNA methyltransferase RlmE family.

Its subcellular location is the cytoplasm. The catalysed reaction is uridine(2552) in 23S rRNA + S-adenosyl-L-methionine = 2'-O-methyluridine(2552) in 23S rRNA + S-adenosyl-L-homocysteine + H(+). Functionally, specifically methylates the uridine in position 2552 of 23S rRNA at the 2'-O position of the ribose in the fully assembled 50S ribosomal subunit. The sequence is that of Ribosomal RNA large subunit methyltransferase E from Methanothermobacter thermautotrophicus (strain ATCC 29096 / DSM 1053 / JCM 10044 / NBRC 100330 / Delta H) (Methanobacterium thermoautotrophicum).